The chain runs to 746 residues: NAD(P)H-quinone oxidoreductase subunit 5, chloroplastic (746 aa).

16 helical membrane-spanning segments follow: residues 9 to 29, 40 to 60, 89 to 109, 125 to 145, 147 to 167, 185 to 205, 221 to 241, 258 to 278, 280 to 300, 327 to 347, 354 to 374, 396 to 416, 425 to 445, 547 to 567, 608 to 628, and 723 to 743; these read WIIP…LLLF, WTFL…YLSI, IDPL…LVLI, FAYM…SNLI, VYFF…FWFT, GDFG…SFEF, VNFL…IAKS, TPIS…FLVA, LLPL…IGII, LGYM…FHLI, ALLF…VGYS, TAFL…CFWS, LLFS…TAFY, ILFP…IGIP, FSVS…KPFY, and YLFL…FFYF.

This sequence belongs to the complex I subunit 5 family. In terms of assembly, NDH is composed of at least 16 different subunits, 5 of which are encoded in the nucleus.

The protein localises to the plastid. Its subcellular location is the chloroplast thylakoid membrane. It carries out the reaction a plastoquinone + NADH + (n+1) H(+)(in) = a plastoquinol + NAD(+) + n H(+)(out). The catalysed reaction is a plastoquinone + NADPH + (n+1) H(+)(in) = a plastoquinol + NADP(+) + n H(+)(out). In terms of biological role, NDH shuttles electrons from NAD(P)H:plastoquinone, via FMN and iron-sulfur (Fe-S) centers, to quinones in the photosynthetic chain and possibly in a chloroplast respiratory chain. The immediate electron acceptor for the enzyme in this species is believed to be plastoquinone. Couples the redox reaction to proton translocation, and thus conserves the redox energy in a proton gradient. The protein is NAD(P)H-quinone oxidoreductase subunit 5, chloroplastic (ndhF) of Barbarea verna (Land cress).